The primary structure comprises 351 residues: N-terminal EF-hand calcium-binding protein 1 (351 aa).

At Ser4 the chain carries Phosphoserine. EF-hand domains are found at residues 26-61 and 60-95; these read KGMSIFLDILRRADKNDDGKLSFEEFKAYFADGVLS and LSGEELHELFHTIDTHNTNNLDTEELCEYFSQHLGE. Ca(2+)-binding residues include Asp39, Asn41, Asp43, Lys45, and Glu50. Residues 135 to 163 are a coiled coil; sequence LLKETLNQLQSLQNSLECAMETTEEQTRQ. Positions 180 to 203 are disordered; it reads GKRSSRRVQRHNSFSPNSPQFNVS. Residues 190 to 202 are compositionally biased toward polar residues; it reads HNSFSPNSPQFNV. Residues Ser192 and Ser197 each carry the phosphoserine modification. Residues 209 to 275 are a coiled coil; sequence EEDNQWMTQI…EEFQLALKHY (67 aa). In terms of domain architecture, ABM spans 252-340; the sequence is MLVQRQMSVI…LETPELTSTM (89 aa).

In terms of assembly, interacts with STX1. May interact with CPNE6. Expressed in brain (at protein level).

It localises to the cytoplasm. This chain is N-terminal EF-hand calcium-binding protein 1 (NECAB1), found in Homo sapiens (Human).